The chain runs to 197 residues: Adenylate kinase (197 aa).

ATP is bound at residue 12–17 (GSGKTT). The segment at 34 to 63 (STGDMLREEVASGSELGKTIESYIAKGALV) is NMP. AMP-binding positions include T35, R40, 61–63 (ALV), 88–91 (GYPR), and Q95. An LID region spans residues 130–144 (GRRAEAAPGEERSDD). Residue R131 coordinates ATP. AMP contacts are provided by R141 and R152. R180 is a binding site for ATP.

It belongs to the adenylate kinase family. As to quaternary structure, monomer.

It localises to the cytoplasm. It carries out the reaction AMP + ATP = 2 ADP. Its pathway is purine metabolism; AMP biosynthesis via salvage pathway; AMP from ADP: step 1/1. Its function is as follows. Catalyzes the reversible transfer of the terminal phosphate group between ATP and AMP. Plays an important role in cellular energy homeostasis and in adenine nucleotide metabolism. This chain is Adenylate kinase, found in Sulfurovum sp. (strain NBC37-1).